The chain runs to 843 residues: Tetratricopeptide repeat protein 7B (843 aa).

One copy of the TPR 1 repeat lies at 97 to 131; the sequence is QESNLIMAKLNYVEGDYKEALNIYARVGLDDLPLT. Ser160 and Ser202 each carry phosphoserine. TPR repeat units lie at residues 219–252, 363–396, 397–430, 479–514, 516–548, and 549–582; these read ETGLQRAHVLYFKNGNLTRGVGRFRELLRAVETR, SVVYDLLTIALGRRGQYEMLSECLERAMKFAFEE, FHLWYQFALSLMAAGKSARAVKVLKECIRLKPDD, TYSLQATDASLRGMQEVLQRKALLAFQRAHSLSPTD, QAAFYLALQLAISRQIPEALGYVRQALQLQGDD, and ANSLHLLALLLSAQKHYHDALNIIDMALSEYPEN. Ser625, Ser629, Ser630, Ser673, Ser677, Ser678, and Ser681 each carry phosphoserine. TPR repeat units lie at residues 696 to 729, 730 to 763, 765 to 797, and 798 to 831; these read AQIWLHAAEVYIGIGKPAEATACTQEAANLFPMS, HNVLYMRGQIAELRGSMDEARRWYEEALAISPTH, KSMQRLALILHQLGRYSLAEKILRDAVQVNSTA, and HEVWNGLGEVLQAQGNDAAATECFLTALELEASS.

As to quaternary structure, component of a phosphatidylinositol 4-kinase (PI4K) complex, composed of PI4KA, EFR3 (EFR3A or EFR3B), TTC7 (TTC7A or TTC7B) and HYCC (HYCC1 or HYCC2). Interacts with PI4KA, interaction is direct. Interacts with EFR3 (EFR3A or EFR3B), interaction is direct. Interacts with HYCC (HYCC1 or HYCC2), interaction is direct. Association with the PI4K complex is strongly reduced by TMEM150A.

The protein localises to the cytoplasm. It localises to the cytosol. It is found in the cell membrane. Functionally, component of a complex required to localize phosphatidylinositol 4-kinase (PI4K) to the plasma membrane. The complex acts as a regulator of phosphatidylinositol 4-phosphate (PtdIns(4)P) synthesis. In the complex, plays a central role in bridging PI4KA to EFR3B and HYCC1, via direct interactions. The polypeptide is Tetratricopeptide repeat protein 7B (TTC7B) (Homo sapiens (Human)).